A 979-amino-acid chain; its full sequence is Protein SMAX1-LIKE 6 (979 aa).

The 183-residue stretch at 8–190 (ARECLTEEAA…PVTQLSSRFS (183 aa)) folds into the Clp R domain. 2 repeat regions span residues 12–86 (LTEE…LDRL) and 100–190 (VSNS…SRFS). An EAR motif is present at residues 833 to 837 (LDLNL).

This sequence belongs to the ClpA/ClpB family. Interacts with TPL/TPR in an EAR-motif dependent manner. Interacts with TPR3. Interacts with MAX2 and TPR2. Interacts with D14. The interaction with D14 occurs in the presence of (2'R) stereoisomers of strigolactones, but not (2'S) stereoisomers. In terms of processing, ubiquitinated upon strigolactone treatment. Probable proteolytic target of SCF(MAX2)-mediated stigolactone signaling. In terms of tissue distribution, detected in roots, seedlings and axillary branches. Expressed in the primary rosette buds and expanding leaves of adult rosettes, the vasculature of the hypocotyls, cotyledons, and mature roots, and in the midvein and petioles of young leaves.

The protein localises to the nucleus. Functionally, probable component of a transcriptional corepressor complex involved in branching control. Regulates cotyledon expansion and lateral root growth, but not germination or hypocotyl elongation. Promotes auxin transport and PIN1 accumulation in the stem and represses BRC1/TCP18 expression in axillary buds. The protein is Protein SMAX1-LIKE 6 of Arabidopsis thaliana (Mouse-ear cress).